Reading from the N-terminus, the 457-residue chain is L-asparaginase-like protein GL17509 (457 aa).

The signal sequence occupies residues 1-20; it reads MRYLCRAQLLSLLLLPLLKA. Disulfide bonds link C72/C78, C172/C188, and C327/C354.

The protein belongs to the Ntn-hydrolase family.

This Drosophila persimilis (Fruit fly) protein is L-asparaginase-like protein GL17509.